Consider the following 156-residue polypeptide: UPF0266 membrane protein NT01EI_1718 (156 aa).

Helical transmembrane passes span 6 to 26 (IALL…EAIM), 46 to 63 (DSLI…RNIS), and 67 to 87 (APFT…IFYL).

It belongs to the UPF0266 family.

It localises to the cell inner membrane. The chain is UPF0266 membrane protein NT01EI_1718 from Edwardsiella ictaluri (strain 93-146).